Here is a 114-residue protein sequence, read N- to C-terminus: Prostate stem cell antigen (114 aa).

The signal sequence occupies residues 1 to 11; that stretch reads MAGLALQPGTA. One can recognise a UPAR/Ly6 domain in the interval 12-86; that stretch reads LLCYSCKAQV…CCDTDLCNAS (75 aa). 5 cysteine pairs are disulfide-bonded: Cys-14–Cys-39, Cys-17–Cys-26, Cys-32–Cys-57, Cys-61–Cys-77, and Cys-78–Cys-83. An N-linked (GlcNAc...) asparagine glycan is attached at Asn-31. The GPI-anchor amidated serine moiety is linked to residue Ser-86. Residues 86–114 constitute a propeptide, removed in mature form; sequence SGAHALQPAAAILALLPALGLLLWGPGQL.

As to quaternary structure, interacts with CHRNA4. Post-translationally, N-glycosylated. In terms of tissue distribution, highly expressed in prostate (basal, secretory and neuroendocrine epithelium cells). Also found in bladder (transitional epithelium), placenta (trophoblasts), stomach (neuroendocrine cells), colon (neuroendocrine cells) and kidney (collecting ducts). Overexpressed in prostate cancers and expression is correlated with tumor stage, grade and androgen-independence. Highly expressed in prostate cancer bone metastases. Expressed in gastric epithelial cells, mainly in the isthmus (at protein level). Not detected in normal intestinal epithelium (at protein level). Expressed in brain cortex; expression is significantly increased in the front cortex of Alzheimer disease patients.

It is found in the cell membrane. Functionally, may be involved in the regulation of cell proliferation. Has a cell-proliferation inhibition activity in vitro. May act as a modulator of nicotinic acetylcholine receptors (nAChRs) activity. In vitro inhibits nicotine-induced signaling probably implicating alpha-3:beta-2- or alpha-7-containing nAChRs. The sequence is that of Prostate stem cell antigen (PSCA) from Homo sapiens (Human).